The sequence spans 65 residues: MEKLFTGTYGVFLESNDSDFEDFINTIMTVLTGKKESKQLSWLTIFIIFVVCIVVFTFLYLKLMC.

The chain crosses the membrane as a helical span at residues 40–60 (LSWLTIFIIFVVCIVVFTFLY).

The protein belongs to the chordopoxvirinae I2 family.

The protein localises to the virion membrane. Functionally, late protein which probably plays a role in virus entry into the host cell. This is Protein I2 homolog from Fowlpox virus (strain NVSL) (FPV).